The following is a 388-amino-acid chain: Pyruvate dehydrogenase E1 component subunit alpha, testis-specific form, mitochondrial (388 aa).

The transit peptide at 1–27 directs the protein to the mitochondrion; the sequence is MLAAFISRVLRRVAQKSARRVLVASRN. Positions 90, 116, 117, 163, 165, 194, 195, 196, 223, and 225 each coordinate pyruvate. Thiamine diphosphate contacts are provided by Y116, R117, G163, V165, D194, G195, A196, and N223. D194 is a Mg(2+) binding site. N223 and Y225 together coordinate Mg(2+). H290 is a binding site for thiamine diphosphate. S291 carries the post-translational modification Phosphoserine; by PDK1, PDK2, PDK3 and PDK4. Position 293 is a phosphoserine (S293). The residue at position 298 (S298) is a Phosphoserine; by PDK3.

Heterotetramer of two PDHA2 and two PDHB subunits. The heterotetramer interacts with DLAT, and is part of the multimeric pyruvate dehydrogenase complex that contains multiple copies of pyruvate dehydrogenase (E1), dihydrolipoamide acetyltransferase (DLAT, E2) and lipoamide dehydrogenase (DLD, E3). These subunits are bound to an inner core composed of about 48 DLAT and 12 PDHX molecules. Thiamine diphosphate is required as a cofactor. The cofactor is Mg(2+). In terms of processing, phosphorylation at Ser-291, Ser-293 and Ser-298 by PDK family kinases inactivates the enzyme; for this phosphorylation at a single site is sufficient. Phosphorylation at Ser-293 interferes with access to active site, and thereby inactivates the enzyme. Dephosphorylation at all three sites, i.e. at Ser-291, Ser-293 and Ser-298, is required for reactivation. As to expression, testis. Expressed in postmeiotic spermatogenic cells.

It localises to the mitochondrion matrix. The catalysed reaction is N(6)-[(R)-lipoyl]-L-lysyl-[protein] + pyruvate + H(+) = N(6)-[(R)-S(8)-acetyldihydrolipoyl]-L-lysyl-[protein] + CO2. Its activity is regulated as follows. Pyruvate dehydrogenase activity is inhibited by phosphorylation of PDHA2; it is reactivated by dephosphorylation. In terms of biological role, the pyruvate dehydrogenase complex catalyzes the overall conversion of pyruvate to acetyl-CoA and CO(2), and thereby links the glycolytic pathway to the tricarboxylic cycle. In Homo sapiens (Human), this protein is Pyruvate dehydrogenase E1 component subunit alpha, testis-specific form, mitochondrial (PDHA2).